The chain runs to 214 residues: Adenylate kinase (214 aa).

10–15 lines the ATP pocket; sequence GAGKGT. The tract at residues 30–59 is NMP; that stretch reads STGDMFREEISAKSELGRKVEDILKRGELV. AMP-binding positions include Thr-31, Arg-36, 57–59, 85–88, and Gln-92; these read ELV and GYPR. The tract at residues 126–163 is LID; that stretch reads NRRICKNCGKIYNLITLPPKINGKCDVCGGELYQREDD. Arg-127 serves as a coordination point for ATP. Cys-130 and Cys-133 together coordinate Zn(2+). Residue 136–137 coordinates ATP; the sequence is IY. Zn(2+) contacts are provided by Cys-150 and Cys-153. Residues Arg-160 and Arg-171 each coordinate AMP. Met-199 contributes to the ATP binding site.

It belongs to the adenylate kinase family. In terms of assembly, monomer.

It localises to the cytoplasm. The enzyme catalyses AMP + ATP = 2 ADP. The protein operates within purine metabolism; AMP biosynthesis via salvage pathway; AMP from ADP: step 1/1. Catalyzes the reversible transfer of the terminal phosphate group between ATP and AMP. Plays an important role in cellular energy homeostasis and in adenine nucleotide metabolism. The chain is Adenylate kinase from Thermosipho melanesiensis (strain DSM 12029 / CIP 104789 / BI429).